A 223-amino-acid chain; its full sequence is Ribose-5-phosphate isomerase A (223 aa).

Substrate contacts are provided by residues 32-35 (TGST), 85-88 (DGAD), and 98-101 (KGGG). Residue Glu-107 is the Proton acceptor of the active site. Lys-125 is a substrate binding site.

The protein belongs to the ribose 5-phosphate isomerase family. Homodimer.

The enzyme catalyses aldehydo-D-ribose 5-phosphate = D-ribulose 5-phosphate. Its pathway is carbohydrate degradation; pentose phosphate pathway; D-ribose 5-phosphate from D-ribulose 5-phosphate (non-oxidative stage): step 1/1. Functionally, catalyzes the reversible conversion of ribose-5-phosphate to ribulose 5-phosphate. This chain is Ribose-5-phosphate isomerase A, found in Pseudomonas savastanoi pv. phaseolicola (strain 1448A / Race 6) (Pseudomonas syringae pv. phaseolicola (strain 1448A / Race 6)).